A 205-amino-acid chain; its full sequence is Regulatory protein RecX (205 aa).

It belongs to the RecX family.

The protein resides in the cytoplasm. Its function is as follows. Modulates RecA activity. This Finegoldia magna (strain ATCC 29328 / DSM 20472 / WAL 2508) (Peptostreptococcus magnus) protein is Regulatory protein RecX.